The sequence spans 626 residues: Hemocyanin AA6 chain (626 aa).

Residues His-170, His-174, His-201, His-321, His-325, and His-361 each contribute to the Cu cation site. Ser-374 is modified (phosphoserine).

It belongs to the tyrosinase family. Hemocyanin subfamily. In terms of assembly, scorpion hemocyanin is a 24-chain polymer with 8 different chains identified, assembled in hexameric substructures. Three disulfide bonds are present. In terms of tissue distribution, hemolymph.

Its subcellular location is the secreted. The protein localises to the extracellular space. Hemocyanins are copper-containing oxygen carriers occurring freely dissolved in the hemolymph of many mollusks and arthropods. The polypeptide is Hemocyanin AA6 chain (Androctonus australis (Sahara scorpion)).